The chain runs to 181 residues: Adenine phosphoribosyltransferase (181 aa).

The protein belongs to the purine/pyrimidine phosphoribosyltransferase family. Homodimer.

The protein resides in the cytoplasm. The enzyme catalyses AMP + diphosphate = 5-phospho-alpha-D-ribose 1-diphosphate + adenine. The protein operates within purine metabolism; AMP biosynthesis via salvage pathway; AMP from adenine: step 1/1. Functionally, catalyzes a salvage reaction resulting in the formation of AMP, that is energically less costly than de novo synthesis. The protein is Adenine phosphoribosyltransferase of Methylobacterium radiotolerans (strain ATCC 27329 / DSM 1819 / JCM 2831 / NBRC 15690 / NCIMB 10815 / 0-1).